We begin with the raw amino-acid sequence, 308 residues long: Polyprenyl-phosphate transporter (308 aa).

Transmembrane regions (helical) follow at residues 15–35 (GLAM…IAFI), 69–89 (INGL…ATLA), 91–111 (LISW…FGLI), 130–150 (LLWL…KPLH), 163–183 (AIAI…LLLI), 200–220 (ILLI…HILS), 228–248 (DVTL…IWPW), and 282–302 (PSQW…VLGL).

It belongs to the PopT family.

The protein resides in the cell inner membrane. Active in alkaline conditions. Flippase that catalyzes the transport of undecaprenyl phosphate (UndP) across the cytoplasmic membrane, from the external side to the cytoplasmic side. Is involved in UndP recycling during peptidoglycan synthesis. Required for cell shape maintenance at alkaline pH and peptidoglycan maintenance. Required by the cholera pathogen for growth and cell shape maintenance in the intestine. This is Polyprenyl-phosphate transporter from Vibrio cholerae serotype O1 (strain ATCC 39315 / El Tor Inaba N16961).